The sequence spans 430 residues: Adenylosuccinate synthetase (430 aa).

Residues 12 to 18 and 40 to 42 contribute to the GTP site; these read GDEGKGK and GHT. D13 functions as the Proton acceptor in the catalytic mechanism. D13 and G40 together coordinate Mg(2+). Residues 13 to 16, 38 to 41, T128, R142, Q223, T238, and R302 contribute to the IMP site; these read DEGK and NAGH. H41 functions as the Proton donor in the catalytic mechanism. 298–304 contacts substrate; sequence TTTGRPR. Residues R304, 330–332, and 412–414 contribute to the GTP site; these read SID and SVG.

The protein belongs to the adenylosuccinate synthetase family. Homodimer. The cofactor is Mg(2+).

The protein resides in the cytoplasm. The enzyme catalyses IMP + L-aspartate + GTP = N(6)-(1,2-dicarboxyethyl)-AMP + GDP + phosphate + 2 H(+). It participates in purine metabolism; AMP biosynthesis via de novo pathway; AMP from IMP: step 1/2. Its function is as follows. Plays an important role in the de novo pathway of purine nucleotide biosynthesis. Catalyzes the first committed step in the biosynthesis of AMP from IMP. The polypeptide is Adenylosuccinate synthetase (Streptococcus pyogenes serotype M12 (strain MGAS9429)).